Here is a 782-residue protein sequence, read N- to C-terminus: Fibrinogen alpha chain (782 aa).

The first 19 residues, 1 to 19 (MLSLRVACLILSLASTVWT), serve as a signal peptide directing secretion. Residues 68–547 (GCRMKGLIDE…KRGRARTMRD (480 aa)) adopt a coiled-coil conformation. A compositionally biased stretch (basic and acidic residues) spans 264–283 (RPGKDGASRGDLPGDSRGDS). Positions 264-374 (RPGKDGASRG…PATRKEYHTG (111 aa)) are disordered. Ser279 is subject to Phosphoserine. Gly residues predominate over residues 311-323 (SGSGSDGNWGSGT). 2 stretches are compositionally biased toward low complexity: residues 324-344 (TGSD…SGSG) and 354-364 (GEFSEFGGSSS). The residue at position 326 (Ser326) is a Phosphoserine. Cysteines 404 and 434 form a disulfide. The residue at position 470 (Ser470) is a Phosphoserine. 4-hydroxyproline; by P4HA1 is present on Pro499. Basic and acidic residues predominate over residues 522–536 (DEAASEAHQEGDTRT). A disordered region spans residues 522 to 542 (DEAASEAHQEGDTRTTKRGRA). Ser526 bears the Phosphoserine mark. The 242-residue stretch at 539-780 (RGRARTMRDC…AVRMKIRPLV (242 aa)) folds into the Fibrinogen C-terminal domain. N-linked (GlcNAc...) asparagine glycosylation is present at Asn602. 4 residues coordinate Ca(2+): Asp707, Asp709, Trp711, and Glu713. A disulfide bond links Cys715 and Cys728.

As to quaternary structure, heterohexamer; disulfide linked. Contains 2 sets of 3 non-identical chains (alpha, beta and gamma). The 2 heterotrimers are in head to head conformation with the N-termini in a small central domain. Conversion of fibrinogen to fibrin is triggered by thrombin, which cleaves fibrinopeptides A and B from alpha and beta chains, and thus exposes the N-terminal polymerization sites responsible for the formation of the soft clot. The soft clot is converted into the hard clot by factor XIIIA which catalyzes the epsilon-(gamma-glutamyl)lysine cross-linking between gamma chains (stronger) and between alpha chains (weaker) of different monomers. Post-translationally, forms F13A-mediated cross-links between a glutamine and the epsilon-amino group of a lysine residue, forming fibronectin-fibrinogen heteropolymers. In terms of processing, phosphorylated by FAM20C in the extracellular medium.

The protein resides in the secreted. Functionally, cleaved by the protease thrombin to yield monomers which, together with fibrinogen beta (FGB) and fibrinogen gamma (FGG), polymerize to form an insoluble fibrin matrix. Fibrin has a major function in hemostasis as one of the primary components of blood clots. In addition, functions during the early stages of wound repair to stabilize the lesion and guide cell migration during re-epithelialization. Was originally thought to be essential for platelet aggregation, based on in vitro studies using anticoagulated blood. However, subsequent studies have shown that it is not absolutely required for thrombus formation in vivo. Enhances expression of SELP in activated platelets via an ITGB3-dependent pathway. Maternal fibrinogen is essential for successful pregnancy. Fibrin deposition is also associated with infection, where it protects against IFNG-mediated hemorrhage. May also facilitate the immune response via both innate and T-cell mediated pathways. In Rattus norvegicus (Rat), this protein is Fibrinogen alpha chain (Fga).